We begin with the raw amino-acid sequence, 426 residues long: MVQIEKVFGREIIDSRGNPAVEVDITLVGGYFGRAACPSGASTGTHEAIEKRDGDFRFFGKGVKKAVEAINTDIRKSLLGMDSTDQPAVDNQLISLDGTDNKGHLGANAILPVSMAVARAASQALQVPLYEHLADRTYLLPVPYMNILNGGAHANWQGADFQEYMIAPVGAPDFPEAVRWGCEVYHTLKAILKKRGLSTGVGDEGGFAPKVSSNRAPLDFITEAIEMAGYKPGKDISLALDPASSEFYSDGVYELKSEGKKLSSEEMTGYYEDMVAVYPIISIEDGLSEDDWNGWIAMTKAIGKKVQLVGDDIFVTNTKRISRGISEKAANAVLIKLNQIGTVTETISAVTMARNAGWSSMISHRSGETVDSFIADLTVSLGTGQIKTGAPCRGERVEKYNQLMRIHEELGSRATYAGKKREIRHL.

Gln162 lines the (2R)-2-phosphoglycerate pocket. The Proton donor role is filled by Glu204. 3 residues coordinate Mg(2+): Asp241, Glu284, and Asp311. Residues Lys336, Arg365, Ser366, and Lys387 each contribute to the (2R)-2-phosphoglycerate site. Lys336 serves as the catalytic Proton acceptor.

Belongs to the enolase family. Mg(2+) serves as cofactor.

It is found in the cytoplasm. It localises to the secreted. The protein localises to the cell surface. It catalyses the reaction (2R)-2-phosphoglycerate = phosphoenolpyruvate + H2O. It functions in the pathway carbohydrate degradation; glycolysis; pyruvate from D-glyceraldehyde 3-phosphate: step 4/5. Its function is as follows. Catalyzes the reversible conversion of 2-phosphoglycerate (2-PG) into phosphoenolpyruvate (PEP). It is essential for the degradation of carbohydrates via glycolysis. This is Enolase 1 from Methanospirillum hungatei JF-1 (strain ATCC 27890 / DSM 864 / NBRC 100397 / JF-1).